The sequence spans 332 residues: DNA-directed RNA polymerase subunit alpha (332 aa).

The tract at residues 1–226 is alpha N-terminal domain (alpha-NTD); it reads MLIAQRPTLT…ELFGLCRELN (226 aa). The alpha C-terminal domain (alpha-CTD) stretch occupies residues 245 to 332; sequence PEMNIPIEDL…GGTFFSPEDE (88 aa).

It belongs to the RNA polymerase alpha chain family. In terms of assembly, homodimer. The RNAP catalytic core consists of 2 alpha, 1 beta, 1 beta' and 1 omega subunit. When a sigma factor is associated with the core the holoenzyme is formed, which can initiate transcription.

The enzyme catalyses RNA(n) + a ribonucleoside 5'-triphosphate = RNA(n+1) + diphosphate. Functionally, DNA-dependent RNA polymerase catalyzes the transcription of DNA into RNA using the four ribonucleoside triphosphates as substrates. This is DNA-directed RNA polymerase subunit alpha from Bifidobacterium adolescentis (strain ATCC 15703 / DSM 20083 / NCTC 11814 / E194a).